The sequence spans 217 residues: Uracil-DNA glycosylase (217 aa).

Aspartate 62 acts as the Proton acceptor in catalysis.

Belongs to the uracil-DNA glycosylase (UDG) superfamily. UNG family.

Its subcellular location is the cytoplasm. It catalyses the reaction Hydrolyzes single-stranded DNA or mismatched double-stranded DNA and polynucleotides, releasing free uracil.. Functionally, excises uracil residues from the DNA which can arise as a result of misincorporation of dUMP residues by DNA polymerase or due to deamination of cytosine. The polypeptide is Uracil-DNA glycosylase (Streptococcus pneumoniae (strain P1031)).